Consider the following 1086-residue polypeptide: Tudor domain-containing protein 7 (1086 aa).

2 consecutive HTH OST-type domains span residues 3-76 (EADL…YAVA) and 222-291 (KMDE…YPAR). Positions 295–306 (PLKSDQDPEKEL) are enriched in basic and acidic residues. Positions 295–324 (PLKSDQDPEKELPPPPPAPKQEVPSQGSPA) are disordered. Positions 325 to 394 (VMPDVKEKVA…TQKAILYAKL (70 aa)) constitute an HTH OST-type 3 domain. Tudor domains follow at residues 501–558 (TVHV…FCSL) and 691–748 (LPFC…FLQE). The interval 844–866 (AASSPGNRNGGTPAPGSPAESLR) is disordered. Position 847 is a phosphoserine (S847). Residues 849–1086 (GNRNGGTPAP…QYLLELSKVN (238 aa)) are interaction with CDK17. Residues 881 to 1086 (TSSFSLEELP…QYLLELSKVN (206 aa)) form an interaction with CABLES1 region.

It belongs to the TDRD7 family. As to quaternary structure, found in a mRNP complex, at least composed of TDRD1, TDRD6, TDRD7 and DDX4. Found in a complex containing CABLES1, CDK16 and CDK17. Interacts with CABLES1, CDK17 and PIWIL1. In terms of tissue distribution, mainly expressed in testis. Expressed in spermatogonia, spermatocytes and round spermatids (at protein level). Also expressed in the developing lens.

Its subcellular location is the cytoplasm. Functionally, component of specific cytoplasmic RNA granules involved in post-transcriptional regulation of specific genes: probably acts by binding to specific mRNAs and regulating their translation. Required for lens transparency during lens development, by regulating translation of genes such as CRYBB3 and HSPB1 in the developing lens. Also required during spermatogenesis. The protein is Tudor domain-containing protein 7 (Tdrd7) of Mus musculus (Mouse).